Reading from the N-terminus, the 63-residue chain is Large ribosomal subunit protein uL30 (63 aa).

Belongs to the universal ribosomal protein uL30 family. As to quaternary structure, part of the 50S ribosomal subunit.

The polypeptide is Large ribosomal subunit protein uL30 (Rickettsia africae (strain ESF-5)).